We begin with the raw amino-acid sequence, 180 residues long: Cytokinin-beta-glucosidase 1 (180 aa).

In terms of biological role, hydrolyzes cytokinin glucosides thus liberating free cytokinins. In Panax ginseng (Korean ginseng), this protein is Cytokinin-beta-glucosidase 1 (ROLC1).